The chain runs to 659 residues: Cysteine-rich receptor-like protein kinase 7 (659 aa).

The signal sequence occupies residues 1 to 23 (MSSLFPFIFLFLFSFLTSFRASA). At 24-273 (QDPRFLAYYC…SLSDKSGNSN (250 aa)) the chain is on the extracellular side. 2 consecutive Gnk2-homologous domains span residues 27–131 (RFLA…HKNI) and 142–244 (FILR…LYDF). 5 N-linked (GlcNAc...) asparagine glycosylation sites follow: Asn35, Asn42, Asn60, Asn69, and Asn103. Asn246 carries N-linked (GlcNAc...) asparagine glycosylation. The chain crosses the membrane as a helical span at residues 274–294 (VVVVAVVVPIIVAVLIFIAGY). The Cytoplasmic segment spans residues 295–659 (CFFAKRAKKT…DKSMSDLDPR (365 aa)). The Protein kinase domain occupies 336 to 622 (FSENNKIGRG…ALPAPQQPGF (287 aa)). ATP contacts are provided by residues 342–350 (IGRGGFGDV) and Lys364. Position 409 is a phosphotyrosine (Tyr409). The active-site Proton acceptor is Asp461. Ser465 is modified (phosphoserine). A Phosphothreonine modification is found at Thr501. Tyr509 carries the post-translational modification Phosphotyrosine. The tract at residues 626-659 (SRPGTNRLDSDQSTTNKSVTVSIDDKSMSDLDPR) is disordered. The span at 636–646 (DQSTTNKSVTV) shows a compositional bias: polar residues. The span at 648-659 (IDDKSMSDLDPR) shows a compositional bias: basic and acidic residues.

Belongs to the protein kinase superfamily. Ser/Thr protein kinase family. CRK subfamily.

The protein resides in the membrane. The enzyme catalyses L-seryl-[protein] + ATP = O-phospho-L-seryl-[protein] + ADP + H(+). The catalysed reaction is L-threonyl-[protein] + ATP = O-phospho-L-threonyl-[protein] + ADP + H(+). This chain is Cysteine-rich receptor-like protein kinase 7 (CRK7), found in Arabidopsis thaliana (Mouse-ear cress).